We begin with the raw amino-acid sequence, 360 residues long: Phenylalanine--tRNA ligase alpha subunit (360 aa).

Glu260 is a binding site for Mg(2+).

Belongs to the class-II aminoacyl-tRNA synthetase family. Phe-tRNA synthetase alpha subunit type 1 subfamily. In terms of assembly, tetramer of two alpha and two beta subunits. It depends on Mg(2+) as a cofactor.

It localises to the cytoplasm. The catalysed reaction is tRNA(Phe) + L-phenylalanine + ATP = L-phenylalanyl-tRNA(Phe) + AMP + diphosphate + H(+). The sequence is that of Phenylalanine--tRNA ligase alpha subunit from Cereibacter sphaeroides (strain ATCC 17029 / ATH 2.4.9) (Rhodobacter sphaeroides).